The primary structure comprises 183 residues: SAGA-associated factor 11 homolog (183 aa).

Residues 98–119 (CSCPNCNRIVAASRFAPHLEKC) form an SGF11-type zinc finger. The segment at 140-167 (GGNYFGADEDDEDDADWSGEKRKKKIAP) is disordered. Residues 146 to 156 (ADEDDEDDADW) are compositionally biased toward acidic residues.

Belongs to the SGF11 family. Component of some SAGA transcription coactivator-HAT complexes. Within the SAGA complex, participates in a subcomplex of SAGA called the DUB module (deubiquitination module).

The protein resides in the nucleus. Functionally, component of the transcription regulatory histone acetylation (HAT) complex SAGA, a multiprotein complex that activates transcription by remodeling chromatin and mediating histone acetylation and deubiquitination. Within the SAGA complex, participates in a subcomplex that specifically deubiquitinates histone H2B. The SAGA complex is recruited to specific gene promoters by activators, where it is required for transcription. The polypeptide is SAGA-associated factor 11 homolog (Culex quinquefasciatus (Southern house mosquito)).